We begin with the raw amino-acid sequence, 312 residues long: Ribosomal RNA small subunit methyltransferase H (312 aa).

S-adenosyl-L-methionine-binding positions include 35–37 (GGH), D55, F79, D101, and Q108.

Belongs to the methyltransferase superfamily. RsmH family.

The protein resides in the cytoplasm. It carries out the reaction cytidine(1402) in 16S rRNA + S-adenosyl-L-methionine = N(4)-methylcytidine(1402) in 16S rRNA + S-adenosyl-L-homocysteine + H(+). Its function is as follows. Specifically methylates the N4 position of cytidine in position 1402 (C1402) of 16S rRNA. In Buchnera aphidicola subsp. Acyrthosiphon pisum (strain APS) (Acyrthosiphon pisum symbiotic bacterium), this protein is Ribosomal RNA small subunit methyltransferase H.